Consider the following 455-residue polypeptide: UDP-glycosyltransferase 75B2 (455 aa).

His16 functions as the Proton acceptor in the catalytic mechanism. His16 lines the an anthocyanidin pocket. Gln337, His352, Trp355, Ser357, Glu360, Asp376, and Gln377 together coordinate UDP-alpha-D-glucose.

Belongs to the UDP-glycosyltransferase family.

The catalysed reaction is (indol-3-yl)acetate + UDP-alpha-D-glucose = 1-O-(indol-3-ylacetyl)-beta-D-glucose + UDP. The protein operates within plant hormone metabolism; auxin conjugation. In terms of biological role, possesses low catalytic activity in vitro. Also active as glucosyltransferase in vitro on benzoates and benzoate derivatives. This chain is UDP-glycosyltransferase 75B2 (UGT75B2), found in Arabidopsis thaliana (Mouse-ear cress).